The chain runs to 692 residues: Protein hook (692 aa).

The Calponin-homology (CH) domain occupies 6 to 123 (SEMYYSLLEW…RLLQLVLGCA (118 aa)). A coiled-coil region spans residues 135–576 (EIMGLEEELQ…YQSKVIQLET (442 aa)). The interval 161 to 180 (AGERSPSSSASGGAGSGGAV) is disordered.

It belongs to the hook family. Homodimer. Interacts with microtubules via its N-terminus.

The protein localises to the cytoplasm. It is found in the cytoskeleton. The protein resides in the endosome. It localises to the synapse. Its function is as follows. Involved in endocytic trafficking by stabilizing organelles of the endocytic pathway. Probably acts as a cytoskeletal linker protein required to tether endosome vesicles to the cytoskeleton. Involved in modulation of endocytosis at stages required for down-regulation of membrane proteins that control synapse size. Not involved in synaptic vesicle recycling. Required in R7 cells for boss endocytosis into multivesicular bodies (MVBs). Has a role in regulating adult longevity. The sequence is that of Protein hook from Drosophila willistoni (Fruit fly).